The sequence spans 421 residues: Gamma-glutamyl phosphate reductase (421 aa).

This sequence belongs to the gamma-glutamyl phosphate reductase family.

It localises to the cytoplasm. The enzyme catalyses L-glutamate 5-semialdehyde + phosphate + NADP(+) = L-glutamyl 5-phosphate + NADPH + H(+). It functions in the pathway amino-acid biosynthesis; L-proline biosynthesis; L-glutamate 5-semialdehyde from L-glutamate: step 2/2. In terms of biological role, catalyzes the NADPH-dependent reduction of L-glutamate 5-phosphate into L-glutamate 5-semialdehyde and phosphate. The product spontaneously undergoes cyclization to form 1-pyrroline-5-carboxylate. The protein is Gamma-glutamyl phosphate reductase of Ruegeria sp. (strain TM1040) (Silicibacter sp.).